The chain runs to 637 residues: DEAD-box ATP-dependent RNA helicase 37 (637 aa).

2 disordered regions span residues 1–68 (MRSS…QPSA) and 86–141 (GPAS…EEAT). 2 stretches are compositionally biased toward low complexity: residues 10-28 (ANAE…PVAN) and 46-68 (GQAP…QPSA). The segment covering 104-116 (GGRGGGGGGGGGW) has biased composition (gly residues). Positions 174–202 (NTFAEIDLGDALNENIRRCKYVKPTPVQR) match the Q motif motif. In terms of domain architecture, Helicase ATP-binding spans 205 to 389 (IPISIAGRDL…SDFLADYIFL (185 aa)). Residue 218 to 225 (AQTGSGKT) participates in ATP binding. The short motif at 333–336 (DEAD) is the DEAD box element. A Helicase C-terminal domain is found at 416-567 (YLMDLLHAQK…EVPQWLERYS (152 aa)). Residues 570 to 610 (SSFGGGGGRNRRSGGARFGGRDFRRDNRGGGGGGYGGGGGG) are disordered. Basic and acidic residues predominate over residues 588–597 (GGRDFRRDNR). Over residues 598–610 (GGGGGGYGGGGGG) the composition is skewed to gly residues.

This sequence belongs to the DEAD box helicase family. DDX3/DED1 subfamily.

The catalysed reaction is ATP + H2O = ADP + phosphate + H(+). In Oryza sativa subsp. japonica (Rice), this protein is DEAD-box ATP-dependent RNA helicase 37 (PL10A).